A 508-amino-acid polypeptide reads, in one-letter code: Protein adenylyltransferase fic-1 (508 aa).

A helical transmembrane segment spans residues 44-64 (TVIIISVLVSLICQHFVPYAV). 2 TPR repeats span residues 147–180 (AILA…APTN) and 181–214 (PQIL…DPGN). An Inhibitory (S/T)XXXE(G/N) motif motif is present at residues 270–275 (TVAIEG). Glu274 serves as a coordination point for ATP. The 136-residue stretch at 326–461 (ISIDDILEMH…LRPFVRYVAK (136 aa)) folds into the Fido domain. The residue at position 352 (Thr352) is an O-AMP-threonine; by autocatalysis. 357-360 (VGRF) serves as a coordination point for ATP. His404 is a catalytic residue. ATP is bound by residues 408–415 (DGNGRTAR), 440–441 (YY), and Asn448. At Thr476 the chain carries O-AMP-threonine; by autocatalysis. Residues 482 to 508 (LNSGDSKLTPEESEVSEKIEAECRAGN) are disordered. Residues 496 to 508 (VSEKIEAECRAGN) are compositionally biased toward basic and acidic residues.

It belongs to the fic family. Forms homodimers; homodimerization might be required for adenylyltransferase activity. In terms of tissue distribution, ubiquitously expressed, with high expression in the germline.

It localises to the endoplasmic reticulum membrane. The protein resides in the nucleus membrane. It carries out the reaction L-tyrosyl-[protein] + ATP = O-(5'-adenylyl)-L-tyrosyl-[protein] + diphosphate. It catalyses the reaction L-threonyl-[protein] + ATP = 3-O-(5'-adenylyl)-L-threonyl-[protein] + diphosphate. The enzyme catalyses 3-O-(5'-adenylyl)-L-threonyl-[protein] + H2O = L-threonyl-[protein] + AMP + H(+). Its activity is regulated as follows. The side chain of Glu-274 determines which of the two opposing activities (AMPylase or de-AMPylase) will take place. In response to endoplasmic reticulum stress, mediates de-AMPylase activity. Adenylyltransferase activity is inhibited by the inhibitory helix present at the N-terminus: Glu-274 binds ATP and competes with ATP-binding at Arg-415, thereby preventing adenylyltransferase activity. In unstressed cells, disengagement of Glu-274 promotes adenylyltransferase activity. Activation dissociates ATP-binding from Glu-274, allowing ordered binding of the entire ATP moiety with the alpha-phosphate in an orientation that is productive for accepting an incoming target hydroxyl side chain. Its function is as follows. Protein that can both mediate the addition of adenosine 5'-monophosphate (AMP) to specific residues of target proteins (AMPylation), and the removal of the same modification from target proteins (de-AMPylation), depending on the context. The side chain of Glu-274 determines which of the two opposing activities (AMPylase or de-AMPylase) will take place. Adenylyltransferase that mediates the addition of adenosine 5'-monophosphate (AMP) to specific residues of target proteins. In vivo target proteins include the heat-shock 70 family proteins hsp-1 and hsp-3 and the translation elongation factors eef-1A, eef-1G and eef-2. Can AMPylate core histone H3 in vitro. Can also act as a phosphodiesterase by mediating removal of ATP (de-AMPylation) from target proteins. Decreases susceptibility to P.aeruginosa-mediated killing and might therefore play a role in the innate immune response. The protein is Protein adenylyltransferase fic-1 of Caenorhabditis elegans.